Consider the following 122-residue polypeptide: Large ribosomal subunit protein uL14 (122 aa).

Belongs to the universal ribosomal protein uL14 family. Part of the 50S ribosomal subunit. Forms a cluster with proteins L3 and L19. In the 70S ribosome, L14 and L19 interact and together make contacts with the 16S rRNA in bridges B5 and B8.

Binds to 23S rRNA. Forms part of two intersubunit bridges in the 70S ribosome. This chain is Large ribosomal subunit protein uL14, found in Mycobacterium ulcerans (strain Agy99).